Here is a 353-residue protein sequence, read N- to C-terminus: Protein pelota homolog (353 aa).

Belongs to the eukaryotic release factor 1 family. Pelota subfamily. Monomer. Requires a divalent metal cation as cofactor.

Its subcellular location is the cytoplasm. Functionally, may function in recognizing stalled ribosomes, interact with stem-loop structures in stalled mRNA molecules, and effect endonucleolytic cleavage of the mRNA. May play a role in the release non-functional ribosomes and degradation of damaged mRNAs. Has endoribonuclease activity. The protein is Protein pelota homolog of Methanobrevibacter smithii (strain ATCC 35061 / DSM 861 / OCM 144 / PS).